A 902-amino-acid chain; its full sequence is Leucine-rich repeat-containing G-protein coupled receptor 5 (902 aa).

The N-terminal stretch at 1 to 22 (MDTSKTSFFLFSVLCSLQLVGA) is a signal peptide. The Extracellular portion of the chain corresponds to 23-558 (ARPGKQQRSC…HLFGSWLTRT (536 aa)). Cystine bridges form between C32–C38 and C36–C49. The LRRNT domain maps to 32–61 (CPTPCECEQEGMLVRVDCSDRALTSLPRNL). LRR repeat units follow at residues 41-61 (EGML…PRNL), 62-85 (SIFT…VMHN), 86-109 (LHFL…AFAG), 111-133 (GSLK…ALHN), 134-157 (LRSL…SFNG), 159-181 (FSLR…ALES), 182-205 (LSAL…AFRN), 207-229 (SSLV…CFDG), 230-253 (LHSL…IKTL), 254-276 (KNLK…AFIG), 278-300 (PSLI…AFQH), 302-324 (PELR…LTGT), 325-347 (TSLE…VCTQ), 348-372 (LPNL…GCQR), 374-393 (QKID…TFQQ), 394-417 (LVGL…SFSS), and 418-441 (LPSL…GLHG). Residues N60 and N74 are each glycosylated (N-linked (GlcNAc...) asparagine). N205 carries an N-linked (GlcNAc...) asparagine glycan. Cysteines 345 and 370 form a disulfide. C476 and C537 are oxidised to a cystine. An N-linked (GlcNAc...) asparagine glycan is attached at N496. A helical transmembrane segment spans residues 559–579 (GVWLIVLLSFVCNALVIATVF). The Cytoplasmic portion of the chain corresponds to 580 to 589 (RPLSYVPSIK). A helical transmembrane segment spans residues 590-610 (LLIGLIAIMNTLMGLSSGVLA). One copy of the LRR 18 repeat lies at 598 to 619 (MNTLMGLSSGVLATVDALTFGN). Over 611–634 (TVDALTFGNFAQYGAWWESGVGCQ) the chain is Extracellular. A disulfide bridge connects residues C633 and C708. The helical transmembrane segment at 635-655 (ITGFLSVFAAETSIFLLTVAA) threads the bilayer. Over 656–678 (LERGFSIKCTTKFETKSSFINVK) the chain is Cytoplasmic. The helical transmembrane segment at 679-699 (LSIVFCFLLSIVIAVSPLLSG) threads the bilayer. The Extracellular portion of the chain corresponds to 700–718 (STYGTSPLCFPLLFGDPSS). The chain crosses the membrane as a helical span at residues 719-739 (MGFMVALVLLNSLCFLVMTIA). Residues 740-763 (YTKLYCSLEKGELENIWDCSMVKH) are Cytoplasmic-facing. Residues 764-784 (IALLLFTNCILYCPVAFLSFS) form a helical membrane-spanning segment. The Extracellular portion of the chain corresponds to 785-798 (SLLNLTFISPEVNK). N788 and N797 each carry an N-linked (GlcNAc...) asparagine glycan. The helical transmembrane segment at 799 to 819 (SILLLIIPLPACLNPLLYILF) threads the bilayer. Residues 820-902 (NPHFKEDIGS…LSAVAFVPCH (83 aa)) are Cytoplasmic-facing.

Belongs to the G-protein coupled receptor 1 family.

The protein localises to the cell membrane. It is found in the golgi apparatus. The protein resides in the trans-Golgi network membrane. Its function is as follows. Receptor for R-spondins that potentiates the canonical Wnt signaling pathway and acts as a stem cell marker of the intestinal epithelium and the hair follicle. Upon binding to R-spondins (RSPO1, RSPO2, RSPO3 or RSPO4), associates with phosphorylated LRP6 and frizzled receptors that are activated by extracellular Wnt receptors, triggering the canonical Wnt signaling pathway to increase expression of target genes. In contrast to classical G-protein coupled receptors, does not activate heterotrimeric G-proteins to transduce the signal. Involved in the development and/or maintenance of the adult intestinal stem cells during postembryonic development. The sequence is that of Leucine-rich repeat-containing G-protein coupled receptor 5 (lgr5) from Xenopus tropicalis (Western clawed frog).